The primary structure comprises 165 residues: 2-halobenzoate 1,2-dioxygenase small subunit (165 aa).

Belongs to the bacterial ring-hydroxylating dioxygenase beta subunit family. As to quaternary structure, heterohexamer of 3 large (CbdA) subunits and 3 small (CbdB) subunits. The heterohexamer is part of 2-halobenzoate dioxygenase two component enzyme system. The other component is a NADH:acceptor reductase (CdbC).

It catalyses the reaction a 2-halobenzoate + NADH + O2 + H(+) = a halide anion + catechol + CO2 + NAD(+). It participates in xenobiotic degradation; benzoate degradation via CoA ligation. Functionally, component of 2-halobenzoate dioxygenase multicomponent enzyme system which catalyzes the incorporation of both atoms of molecular oxygen into 2-halobenzoate to form catechol. This Burkholderia cepacia (Pseudomonas cepacia) protein is 2-halobenzoate 1,2-dioxygenase small subunit (cbdB).